We begin with the raw amino-acid sequence, 673 residues long: ATP-dependent DNA helicase Rep (673 aa).

A UvrD-like helicase ATP-binding domain is found at M1–S280. Residues A22–T29 and R278 each bind ATP. The UvrD-like helicase C-terminal domain occupies G281–G562.

This sequence belongs to the helicase family. UvrD subfamily. As to quaternary structure, homodimer in association with DNA.

The catalysed reaction is Couples ATP hydrolysis with the unwinding of duplex DNA by translocating in the 3'-5' direction.. The enzyme catalyses ATP + H2O = ADP + phosphate + H(+). With respect to regulation, binding to DNA induces dimerization, which is required for DNA helicase activity. Helicase activity is stimulated by PriC. In terms of biological role, rep helicase is a single-stranded (ss)DNA-dependent ATPase involved in DNA replication; it can initiate unwinding at a nick in the DNA. It binds to ssDNA and acts in a progressive fashion along the DNA in the 3' to 5' direction. Binds double-stranded (ds)DNA with a 5' ss- but not 3' ss-extension and forked structures with either lagging or leading ssDNA. Part of the PriC-Rep pathway for restart of stalled replication forks, which reloads the DnaB replicative helicase on sites other than the origin of replication. This Escherichia coli (strain K12) protein is ATP-dependent DNA helicase Rep.